The primary structure comprises 218 residues: Large ribosomal subunit protein uL3 (218 aa).

The disordered stretch occupies residues 126 to 163; sequence HGFSRGPMTHGSKNHRQPGSIGAGTTPGRIYPGKRMSG.

It belongs to the universal ribosomal protein uL3 family. In terms of assembly, part of the 50S ribosomal subunit. Forms a cluster with proteins L14 and L19.

Functionally, one of the primary rRNA binding proteins, it binds directly near the 3'-end of the 23S rRNA, where it nucleates assembly of the 50S subunit. This Synechococcus sp. (strain CC9311) protein is Large ribosomal subunit protein uL3.